The following is a 339-amino-acid chain: Glycerol-3-phosphate dehydrogenase [NAD(P)+] (339 aa).

Ser14, Tyr15, His35, and Lys109 together coordinate NADPH. Lys109, Gly138, and Thr140 together coordinate sn-glycerol 3-phosphate. Residue Ala142 participates in NADPH binding. Residues Lys194, Asp247, Ser257, Arg258, and Asn259 each contribute to the sn-glycerol 3-phosphate site. The active-site Proton acceptor is Lys194. Arg258 lines the NADPH pocket. 2 residues coordinate NADPH: Val282 and Glu284.

It belongs to the NAD-dependent glycerol-3-phosphate dehydrogenase family.

It is found in the cytoplasm. The enzyme catalyses sn-glycerol 3-phosphate + NAD(+) = dihydroxyacetone phosphate + NADH + H(+). The catalysed reaction is sn-glycerol 3-phosphate + NADP(+) = dihydroxyacetone phosphate + NADPH + H(+). It functions in the pathway membrane lipid metabolism; glycerophospholipid metabolism. Catalyzes the reduction of the glycolytic intermediate dihydroxyacetone phosphate (DHAP) to sn-glycerol 3-phosphate (G3P), the key precursor for phospholipid synthesis. This is Glycerol-3-phosphate dehydrogenase [NAD(P)+] from Shewanella amazonensis (strain ATCC BAA-1098 / SB2B).